A 234-amino-acid polypeptide reads, in one-letter code: DNA repair protein RecO (234 aa).

This sequence belongs to the RecO family.

Functionally, involved in DNA repair and RecF pathway recombination. The protein is DNA repair protein RecO of Coxiella burnetii (strain RSA 331 / Henzerling II).